We begin with the raw amino-acid sequence, 408 residues long: Dual-specificity RNA methyltransferase RlmN (408 aa).

Residue Glu120 is the Proton acceptor of the active site. A Radical SAM core domain is found at 126 to 375 (EEGRGTLCIS…IRTPRGRDIL (250 aa)). An intrachain disulfide couples Cys133 to Cys378. Positions 140, 144, and 147 each coordinate [4Fe-4S] cluster. S-adenosyl-L-methionine-binding positions include 204-205 (GE), Ser236, 258-260 (SLH), and Asn335. Cys378 acts as the S-methylcysteine intermediate in catalysis.

Belongs to the radical SAM superfamily. RlmN family. It depends on [4Fe-4S] cluster as a cofactor.

The protein resides in the cytoplasm. The catalysed reaction is adenosine(2503) in 23S rRNA + 2 reduced [2Fe-2S]-[ferredoxin] + 2 S-adenosyl-L-methionine = 2-methyladenosine(2503) in 23S rRNA + 5'-deoxyadenosine + L-methionine + 2 oxidized [2Fe-2S]-[ferredoxin] + S-adenosyl-L-homocysteine. The enzyme catalyses adenosine(37) in tRNA + 2 reduced [2Fe-2S]-[ferredoxin] + 2 S-adenosyl-L-methionine = 2-methyladenosine(37) in tRNA + 5'-deoxyadenosine + L-methionine + 2 oxidized [2Fe-2S]-[ferredoxin] + S-adenosyl-L-homocysteine. Functionally, specifically methylates position 2 of adenine 2503 in 23S rRNA and position 2 of adenine 37 in tRNAs. m2A2503 modification seems to play a crucial role in the proofreading step occurring at the peptidyl transferase center and thus would serve to optimize ribosomal fidelity. This is Dual-specificity RNA methyltransferase RlmN from Rhizobium johnstonii (strain DSM 114642 / LMG 32736 / 3841) (Rhizobium leguminosarum bv. viciae).